A 94-amino-acid chain; its full sequence is Pyrimidine/purine nucleoside phosphorylase (94 aa).

The protein belongs to the nucleoside phosphorylase PpnP family.

It catalyses the reaction a purine D-ribonucleoside + phosphate = a purine nucleobase + alpha-D-ribose 1-phosphate. The enzyme catalyses adenosine + phosphate = alpha-D-ribose 1-phosphate + adenine. The catalysed reaction is cytidine + phosphate = cytosine + alpha-D-ribose 1-phosphate. It carries out the reaction guanosine + phosphate = alpha-D-ribose 1-phosphate + guanine. It catalyses the reaction inosine + phosphate = alpha-D-ribose 1-phosphate + hypoxanthine. The enzyme catalyses thymidine + phosphate = 2-deoxy-alpha-D-ribose 1-phosphate + thymine. The catalysed reaction is uridine + phosphate = alpha-D-ribose 1-phosphate + uracil. It carries out the reaction xanthosine + phosphate = alpha-D-ribose 1-phosphate + xanthine. Its function is as follows. Catalyzes the phosphorolysis of diverse nucleosides, yielding D-ribose 1-phosphate and the respective free bases. Can use uridine, adenosine, guanosine, cytidine, thymidine, inosine and xanthosine as substrates. Also catalyzes the reverse reactions. The chain is Pyrimidine/purine nucleoside phosphorylase from Aeromonas hydrophila subsp. hydrophila (strain ATCC 7966 / DSM 30187 / BCRC 13018 / CCUG 14551 / JCM 1027 / KCTC 2358 / NCIMB 9240 / NCTC 8049).